The primary structure comprises 249 residues: Coproheme decarboxylase (249 aa).

Fe-coproporphyrin III is bound by residues arginine 131, 145–149, histidine 172, glutamine 185, and serine 223; that span reads YPMDK. Residue tyrosine 145 is part of the active site.

This sequence belongs to the ChdC family. Type 1 subfamily. Requires Fe-coproporphyrin III as cofactor.

It catalyses the reaction Fe-coproporphyrin III + 2 H2O2 + 2 H(+) = heme b + 2 CO2 + 4 H2O. It carries out the reaction Fe-coproporphyrin III + H2O2 + H(+) = harderoheme III + CO2 + 2 H2O. The enzyme catalyses harderoheme III + H2O2 + H(+) = heme b + CO2 + 2 H2O. The protein operates within porphyrin-containing compound metabolism; protoheme biosynthesis. Involved in coproporphyrin-dependent heme b biosynthesis. Catalyzes the decarboxylation of Fe-coproporphyrin III (coproheme) to heme b (protoheme IX), the last step of the pathway. The reaction occurs in a stepwise manner with a three-propionate intermediate. This Halalkalibacterium halodurans (strain ATCC BAA-125 / DSM 18197 / FERM 7344 / JCM 9153 / C-125) (Bacillus halodurans) protein is Coproheme decarboxylase.